A 449-amino-acid polypeptide reads, in one-letter code: Chromosomal replication initiator protein DnaA (449 aa).

The domain I, interacts with DnaA modulators stretch occupies residues 1–72; it reads MPNLEELWAY…VEGVYEFAQL (72 aa). The segment at 72 to 109 is domain II; sequence LEVDPVIMTKDELQPAPATDQRPAVEEDDQNLTFKAKT. The segment at 110 to 326 is domain III, AAA+ region; it reads HLNPKYTFDR…GALVRVQAFS (217 aa). The ATP site is built by Gly-154, Gly-156, Lys-157, and Thr-158. Residues 327-449 are domain IV, binds dsDNA; the sequence is TMKNEDITTS…ELRNILKNRG (123 aa).

The protein belongs to the DnaA family. In terms of assembly, oligomerizes as a right-handed, spiral filament on DNA at oriC.

The protein resides in the cytoplasm. In terms of biological role, plays an essential role in the initiation and regulation of chromosomal replication. ATP-DnaA binds to the origin of replication (oriC) to initiate formation of the DNA replication initiation complex once per cell cycle. Binds the DnaA box (a 9 base pair repeat at the origin) and separates the double-stranded (ds)DNA. Forms a right-handed helical filament on oriC DNA; dsDNA binds to the exterior of the filament while single-stranded (ss)DNA is stabiized in the filament's interior. The ATP-DnaA-oriC complex binds and stabilizes one strand of the AT-rich DNA unwinding element (DUE), permitting loading of DNA polymerase. After initiation quickly degrades to an ADP-DnaA complex that is not apt for DNA replication. Binds acidic phospholipids. This is Chromosomal replication initiator protein DnaA from Lacticaseibacillus casei (strain BL23) (Lactobacillus casei).